We begin with the raw amino-acid sequence, 68 residues long: Large ribosomal subunit protein eL24 (68 aa).

Zn(2+) is bound by residues C7, C10, C33, and C37. The C4-type zinc-finger motif lies at 7–37 (CSYCGREFEPGTGKMFVRNDGRVLFFCSSKC).

Belongs to the eukaryotic ribosomal protein eL24 family. As to quaternary structure, part of the 50S ribosomal subunit. Forms a cluster with proteins L3 and L14. Zn(2+) serves as cofactor.

Functionally, binds to the 23S rRNA. The chain is Large ribosomal subunit protein eL24 from Thermococcus onnurineus (strain NA1).